The following is a 348-amino-acid chain: Phospho-2-dehydro-3-deoxyheptonate aldolase, Trp-sensitive (348 aa).

Belongs to the class-I DAHP synthase family.

It catalyses the reaction D-erythrose 4-phosphate + phosphoenolpyruvate + H2O = 7-phospho-2-dehydro-3-deoxy-D-arabino-heptonate + phosphate. The protein operates within metabolic intermediate biosynthesis; chorismate biosynthesis; chorismate from D-erythrose 4-phosphate and phosphoenolpyruvate: step 1/7. Functionally, stereospecific condensation of phosphoenolpyruvate (PEP) and D-erythrose-4-phosphate (E4P) giving rise to 3-deoxy-D-arabino-heptulosonate-7-phosphate (DAHP). In Buchnera aphidicola subsp. Schizaphis graminum (strain Sg), this protein is Phospho-2-dehydro-3-deoxyheptonate aldolase, Trp-sensitive (aroH).